Reading from the N-terminus, the 495-residue chain is Regulator of G-protein signaling 7 (495 aa).

Positions 37–112 constitute a DEP domain; the sequence is EKNGIPIRTV…DDGTFYRFQT (76 aa). 2 positions are modified to phosphoserine: Ser229 and Ser241. The disordered stretch occupies residues 235 to 256; the sequence is NDIRSHSPTHTPTPETKPPTED. Thr243 is subject to Phosphothreonine. Residues 255–316 form the G protein gamma domain; sequence EDELQQQIKY…LSDDTTFWEL (62 aa). Positions 333–448 constitute an RGS domain; sequence GMDEALKDPV…IRSSAYQELL (116 aa). Residue Ser434 is modified to Phosphoserine.

As to quaternary structure, interacts with GNB5, forming the RGS7-GNB5 complex. Interacts with GPR158; promotes the GTPase activator activity of the RGS7-GNB5 complex in absence of glycine, in contrast GTPase activator activity of the RGS7-GNB5 complex is inhibited in presence of glycine. Interacts with GPR179. Interacts with PKD1; this prevents rapid proteasomal degradation. Interacts with RGS7BP, leading to regulate the subcellular location of the heterodimer formed with GNB5. Interacts (phosphorylated form) with 14-3-3 protein YWHAQ. Interacts with SNAPIN. Interacts with GNAI1. Interacts with GNAO1, GNAI3 and GNAZ. Post-translationally, palmitoylated. In terms of processing, ubiquitinated, leading to rapid proteasomal degradation. Phosphorylation and subsequent interaction with 14-3-3 proteins inhibits GAP activity.

The protein resides in the cytoplasm. It is found in the cytosol. The protein localises to the cell membrane. Its subcellular location is the membrane. Its function is as follows. GTPase activator component of the RGS7-GNB5 complex that regulates G protein-coupled receptor signaling cascades. The RGS7-GNB5 complex acts as an inhibitor signal transduction by promoting the GTPase activity of G protein alpha subunits, such as GNAO1, thereby driving them into their inactive GDP-bound form. May play a role in synaptic vesicle exocytosis. Glycine-dependent regulation of the RGS7-GNB5 complex by GPR158 affects mood and cognition via its ability to regulate neuronal excitability in L2/L3 pyramidal neurons of the prefrontal cortex. Modulates the activity of potassium channels that are activated by GNAO1 in response to muscarinic acetylcholine receptor M2/CHRM2 signaling. The chain is Regulator of G-protein signaling 7 (RGS7) from Homo sapiens (Human).